The following is a 355-amino-acid chain: NAD-dependent protein deacylase sirtuin-6 (355 aa).

Residue Ser2 is modified to N-acetylserine. The residue at position 10 (Ser10) is a Phosphoserine; by MAPK8. A Deacetylase sirtuin-type domain is found at 27–272; sequence PEELERKVWE…TRLMKHLGLE (246 aa). An N6-acetyllysine modification is found at Lys33. Residues Ala53, Thr57, Phe64, Arg65, Trp71, Gln113, and His133 each contribute to the NAD(+) site. His133 (proton acceptor) is an active-site residue. Residues Cys141, Cys144, and Cys166 each contribute to the Zn(2+) site. Lys170 participates in a covalent cross-link: Glycyl lysine isopeptide (Lys-Gly) (interchain with G-Cter in ubiquitin). Cys177 is a binding site for Zn(2+). Residues Gly214, Ser216, Asn240, Gln242, and Val258 each contribute to the NAD(+) site. Residues 284-355 are disordered; that stretch reads RALPPLPRPP…KRVKAKAVPS (72 aa). Pro residues predominate over residues 287-296; the sequence is PPLPRPPTPK. Thr294 is modified (phosphothreonine). Residues Ser303 and Ser330 each carry the phosphoserine modification. Positions 343 to 355 are enriched in basic residues; sequence RPPKRVKAKAVPS.

The protein belongs to the sirtuin family. Class IV subfamily. As to quaternary structure, homodimer; binds to nucleosomes and DNA ends as a homodimer. Interacts with RELA; interferes with RELA binding to target DNA. Interacts with SMARCA5; promoting recruitment of SMARCA5/SNF2H to double-strand breaks (DSBs) sites. Interacts with the mTORC2 complex; preventing the ability of SIRT6 to deacetylate FOXO1. Interacts with the CLOCK-BMAL1 complex; recruited by the CLOCK-BMAL1 complex to regulate expression of clock-controlled genes. Interacts with CSNK2A2; preventing CSNK2A2 localization to the nucleus. (Microbial infection) Interacts with Kaposi's sarcoma-associated herpesvirus protein VIRF-1; this interaction prevents SIRT6 deubiquitination by USP10. Zn(2+) is required as a cofactor. In terms of processing, acetylated at Lys-33. Deacetylation at Lys-33 by SIRT1 promotes homomultimerization and binding to double-strand breaks (DSBs) sites. Phosphorylation at Ser-10 by MAPK8/JNK1 in response to oxidative stress stimulates the mono-ADP-ribosyltransferase activity on PARP1, leading to PARP1 recruitment to double-strand breaks (DSBs). Post-translationally, monoubiquitinated at Lys-170 by STUB1/CHIP, preventing its degradation by the proteasome. Deubiquitinated by USP10, also preventing its degradation by the proteasome. In terms of processing, sumoylated, leading to specifically decrease ability to deacetylate histone H3 at 'Lys-56' (H3K56ac).

The protein resides in the nucleus. It localises to the chromosome. The protein localises to the telomere. Its subcellular location is the endoplasmic reticulum. The catalysed reaction is N(6)-acetyl-L-lysyl-[protein] + NAD(+) + H2O = 2''-O-acetyl-ADP-D-ribose + nicotinamide + L-lysyl-[protein]. It catalyses the reaction N(6)-tetradecanoyl-L-lysyl-[protein] + NAD(+) + H2O = 2''-O-tetradecanoyl-ADP-D-ribose + nicotinamide + L-lysyl-[protein]. The enzyme catalyses N(6)-hexadecanoyl-L-lysyl-[protein] + NAD(+) + H2O = 2''-O-hexadecanoyl-ADP-D-ribose + nicotinamide + L-lysyl-[protein]. It carries out the reaction L-lysyl-[protein] + NAD(+) = N(6)-(ADP-D-ribosyl)-L-lysyl-[protein] + nicotinamide + H(+). The catalysed reaction is L-arginyl-[protein] + NAD(+) = N(omega)-(ADP-D-ribosyl)-L-arginyl-[protein] + nicotinamide + H(+). With respect to regulation, compared to the defatty-acylase activity, the protein deacetylase activity is weak in vitro, and requires activation. The histone deacetylase activity is strongly activated upon binding to nucleosomes and chromatin in vivo. Two molecules of SIRT6 associate with the acidic patch of one nucleosome, while the C-terminal disordered region of SIRT6 associates with nucleosomal DNA, leading to efficient histone deacetylation. The protein-lysine deacetylase activity is also activated by long-chain free fatty-acids. The histone deacetylase activity is specifically repressed by long non-coding RNA lncPRESS1, which binds to SIRT6 and prevents chromatin-binding, thereby promoting stem cell pluripotency. Due to its essential role as tumor suppressor and involvement in DNA repair and life span, extensive research is made for the identification of small compound regulators of SIRT6. Nitro-fatty acids (nitro-oleic acid and nitro-conjugated linoleic acid) strongly stimulate the protein-lysine deacetylase activity by forming a covalent Michael adduct formation with Cys-18. Activated by UBCS039 (4-(pyridin-3-yl)-4,5- dihydropyrrolo[1,2-a]quinoxaline). Inhibited by non-selective hydroxamate trichostatin A inhibitor. Deacetylase activity is activated by fluvastatin and quercetin-based compounds. The protein-lysine deacetylase activity, but not the defatty-acylase activity, is specifically activated by MDL-800 and MDL-801 activators in vivo, enhancing the histone deacetylase and tumor suppressor activities. MDL-800 and MDL-801 selectively activate SIRT6 and not other members of the sirtuin family. The binding-mode of MDL-801 is however subject to discussion. Functionally, NAD-dependent protein deacetylase, deacylase and mono-ADP-ribosyltransferase that plays an essential role in DNA damage repair, telomere maintenance, metabolic homeostasis, inflammation, tumorigenesis and aging. Displays protein-lysine deacetylase or defatty-acylase (demyristoylase and depalmitoylase) activity, depending on the context. Acts as a key histone deacetylase by catalyzing deacetylation of histone H3 at 'Lys-9', 'Lys-18' and 'Lys-56' (H3K9ac, H3K18ac and H3K56ac, respectively), suppressing target gene expression of several transcription factors, including NF-kappa-B. Acts as an inhibitor of transcription elongation by mediating deacetylation of H3K9ac and H3K56ac, preventing release of NELFE from chromatin and causing transcriptional pausing. Involved in DNA repair by promoting double-strand break (DSB) repair: acts as a DSB sensor by recognizing and binding DSB sites, leading to (1) recruitment of DNA repair proteins, such as SMARCA5/SNF2H, and (2) deacetylation of histone H3K9ac and H3K56ac. SIRT6 participation to DSB repair is probably involved in extension of life span. Also promotes DNA repair by deacetylating non-histone proteins, such as DDB2 and p53/TP53. Specifically deacetylates H3K18ac at pericentric heterochromatin, thereby maintaining pericentric heterochromatin silencing at centromeres and protecting against genomic instability and cellular senescence. Involved in telomere maintenance by catalyzing deacetylation of histone H3 in telomeric chromatin, regulating telomere position effect and telomere movement in response to DNA damage. Required for embryonic stem cell differentiation by mediating histone deacetylation of H3K9ac. Plays a major role in metabolism by regulating processes such as glycolysis, gluconeogenesis, insulin secretion and lipid metabolism. Inhibits glycolysis via histone deacetylase activity and by acting as a corepressor of the transcription factor HIF1A, thereby controlling the expression of multiple glycolytic genes. Has tumor suppressor activity by repressing glycolysis, thereby inhibiting the Warburg effect. Also regulates glycolysis and tumorigenesis by mediating deacetylation and nuclear export of non-histone proteins, such as isoform M2 of PKM (PKM2). Acts as a negative regulator of gluconeogenesis by mediating deacetylation of non-histone proteins, such as FOXO1 and KAT2A/GCN5. Promotes beta-oxidation of fatty acids during fasting by catalyzing deacetylation of NCOA2, inducing coactivation of PPARA. Acts as a regulator of lipid catabolism in brown adipocytes, both by catalyzing deacetylation of histones and non-histone proteins, such as FOXO1. Also acts as a regulator of circadian rhythms, both by regulating expression of clock-controlled genes involved in lipid and carbohydrate metabolism, and by catalyzing deacetylation of PER2. The defatty-acylase activity is specifically involved in regulation of protein secretion. Has high activity toward long-chain fatty acyl groups and mediates protein-lysine demyristoylation and depalmitoylation of target proteins, such as RRAS2 and TNF, thereby regulating their secretion. Also acts as a mono-ADP-ribosyltransferase by mediating mono-ADP-ribosylation of PARP1, TRIM28/KAP1 or SMARCC2/BAF170. Mono-ADP-ribosyltransferase activity is involved in DNA repair, cellular senescence, repression of LINE-1 retrotransposon elements and regulation of transcription. In Homo sapiens (Human), this protein is NAD-dependent protein deacylase sirtuin-6.